The primary structure comprises 697 residues: Histone-lysine N-methyltransferase SETDB2 (697 aa).

The MBD domain maps to 172–242 (LKKENPLNLP…DNFSFSTQVQ (71 aa)). The Pre-SET domain maps to 304–378 (KCCSCTDGCL…LCQNRVVQHG (75 aa)). 9 residues coordinate Zn(2+): cysteine 306, cysteine 308, cysteine 312, cysteine 318, cysteine 320, cysteine 359, cysteine 363, cysteine 365, and cysteine 370. An SET domain is found at 381 to 672 (LRLQVFKTDT…AGTELTWDYN (292 aa)). An S-adenosyl-L-methionine-binding site is contributed by 391 to 393 (KGW). Disordered regions lie at residues 438–461 (KEDN…HSDS) and 529–605 (VHNS…STSP). The segment covering 565–581 (SGYVSEESSSSVISGGH) has biased composition (low complexity). Residues arginine 626 and 629–630 (NH) each bind S-adenosyl-L-methionine. Positions 632, 685, 687, and 692 each coordinate Zn(2+).

It belongs to the class V-like SAM-binding methyltransferase superfamily.

It localises to the nucleus. It is found in the chromosome. It carries out the reaction N(6),N(6)-dimethyl-L-lysyl(9)-[histone H3] + S-adenosyl-L-methionine = N(6),N(6),N(6)-trimethyl-L-lysyl(9)-[histone H3] + S-adenosyl-L-homocysteine + H(+). Histone methyltransferase involved in left-right axis specification in early development and mitosis. Specifically trimethylates 'Lys-9' of histone H3 (H3K9me3). H3K9me3 represents a specific tag for epigenetic transcriptional repression by recruiting HP1 (CBX1, CBX3 and/or CBX5) proteins to methylated histones. Contributes to H3K9me3 in both the interspersed repetitive elements and centromere-associated repeats. Plays a role in chromosome condensation and segregation during mitosis. The polypeptide is Histone-lysine N-methyltransferase SETDB2 (setdb2) (Xenopus tropicalis (Western clawed frog)).